A 300-amino-acid polypeptide reads, in one-letter code: Porphobilinogen deaminase (300 aa).

C243 carries the post-translational modification S-(dipyrrolylmethanemethyl)cysteine.

It belongs to the HMBS family. In terms of assembly, monomer. Dipyrromethane is required as a cofactor.

The catalysed reaction is 4 porphobilinogen + H2O = hydroxymethylbilane + 4 NH4(+). Its pathway is porphyrin-containing compound metabolism; protoporphyrin-IX biosynthesis; coproporphyrinogen-III from 5-aminolevulinate: step 2/4. Tetrapolymerization of the monopyrrole PBG into the hydroxymethylbilane pre-uroporphyrinogen in several discrete steps. In Clostridium novyi (strain NT), this protein is Porphobilinogen deaminase.